A 358-amino-acid chain; its full sequence is Dual-specificity RNA methyltransferase RlmN (358 aa).

The active-site Proton acceptor is E86. Residues R105–D338 enclose the Radical SAM core domain. A disulfide bridge connects residues C112 and C343. [4Fe-4S] cluster is bound by residues C119, C123, and C126. Residues G169 to E170, S201, S224 to H226, and N300 contribute to the S-adenosyl-L-methionine site. Residue C343 is the S-methylcysteine intermediate of the active site.

This sequence belongs to the radical SAM superfamily. RlmN family. It depends on [4Fe-4S] cluster as a cofactor.

The protein resides in the cytoplasm. It carries out the reaction adenosine(2503) in 23S rRNA + 2 reduced [2Fe-2S]-[ferredoxin] + 2 S-adenosyl-L-methionine = 2-methyladenosine(2503) in 23S rRNA + 5'-deoxyadenosine + L-methionine + 2 oxidized [2Fe-2S]-[ferredoxin] + S-adenosyl-L-homocysteine. It catalyses the reaction adenosine(37) in tRNA + 2 reduced [2Fe-2S]-[ferredoxin] + 2 S-adenosyl-L-methionine = 2-methyladenosine(37) in tRNA + 5'-deoxyadenosine + L-methionine + 2 oxidized [2Fe-2S]-[ferredoxin] + S-adenosyl-L-homocysteine. In terms of biological role, specifically methylates position 2 of adenine 2503 in 23S rRNA and position 2 of adenine 37 in tRNAs. m2A2503 modification seems to play a crucial role in the proofreading step occurring at the peptidyl transferase center and thus would serve to optimize ribosomal fidelity. The polypeptide is Dual-specificity RNA methyltransferase RlmN (Campylobacter hominis (strain ATCC BAA-381 / DSM 21671 / CCUG 45161 / LMG 19568 / NCTC 13146 / CH001A)).